Reading from the N-terminus, the 698-residue chain is Elongation factor G (698 aa).

The tr-type G domain maps to 6–281; that stretch reads ENIRNIGICA…AVVDYLPSPI (276 aa). Residues 15 to 22, 79 to 83, and 133 to 136 contribute to the GTP site; these read AHIDAGKT, DTPGH, and NKMD.

Belongs to the TRAFAC class translation factor GTPase superfamily. Classic translation factor GTPase family. EF-G/EF-2 subfamily.

The protein resides in the cytoplasm. In terms of biological role, catalyzes the GTP-dependent ribosomal translocation step during translation elongation. During this step, the ribosome changes from the pre-translocational (PRE) to the post-translocational (POST) state as the newly formed A-site-bound peptidyl-tRNA and P-site-bound deacylated tRNA move to the P and E sites, respectively. Catalyzes the coordinated movement of the two tRNA molecules, the mRNA and conformational changes in the ribosome. This is Elongation factor G from Rickettsia bellii (strain RML369-C).